The chain runs to 85 residues: Putative membrane protein insertion efficiency factor (85 aa).

Belongs to the UPF0161 family.

It is found in the cell membrane. Its function is as follows. Could be involved in insertion of integral membrane proteins into the membrane. Functionally, lyses fish blood cells. The polypeptide is Putative membrane protein insertion efficiency factor (hlyA) (Aeromonas hydrophila).